The following is a 236-amino-acid chain: ATP synthase subunit a (236 aa).

5 helical membrane passes run 17 to 37 (LANV…AVLA), 80 to 100 (MTLI…SVVI), 114 to 134 (VVTL…GIKL), 179 to 199 (ILLA…IAAI), and 208 to 228 (FSIF…MVYM).

This sequence belongs to the ATPase A chain family. F-type ATPases have 2 components, CF(1) - the catalytic core - and CF(0) - the membrane proton channel. CF(1) has five subunits: alpha(3), beta(3), gamma(1), delta(1), epsilon(1). CF(0) has three main subunits: a(1), b(2) and c(9-12). The alpha and beta chains form an alternating ring which encloses part of the gamma chain. CF(1) is attached to CF(0) by a central stalk formed by the gamma and epsilon chains, while a peripheral stalk is formed by the delta and b chains.

The protein localises to the cell membrane. Functionally, key component of the proton channel; it plays a direct role in the translocation of protons across the membrane. The sequence is that of ATP synthase subunit a from Anoxybacillus flavithermus (strain DSM 21510 / WK1).